Consider the following 375-residue polypeptide: Queuine tRNA-ribosyltransferase (375 aa).

Residue D89 is the Proton acceptor of the active site. Residues 89–93 (DSGGF), D143, Q187, and G214 contribute to the substrate site. Residues 245–251 (GVGKPED) are RNA binding. The active-site Nucleophile is D264. An RNA binding; important for wobble base 34 recognition region spans residues 269–273 (TRNAR). Zn(2+) contacts are provided by C302, C304, C307, and H333.

This sequence belongs to the queuine tRNA-ribosyltransferase family. In terms of assembly, homodimer. Within each dimer, one monomer is responsible for RNA recognition and catalysis, while the other monomer binds to the replacement base PreQ1. It depends on Zn(2+) as a cofactor.

The enzyme catalyses 7-aminomethyl-7-carbaguanine + guanosine(34) in tRNA = 7-aminomethyl-7-carbaguanosine(34) in tRNA + guanine. Its pathway is tRNA modification; tRNA-queuosine biosynthesis. Functionally, catalyzes the base-exchange of a guanine (G) residue with the queuine precursor 7-aminomethyl-7-deazaguanine (PreQ1) at position 34 (anticodon wobble position) in tRNAs with GU(N) anticodons (tRNA-Asp, -Asn, -His and -Tyr). Catalysis occurs through a double-displacement mechanism. The nucleophile active site attacks the C1' of nucleotide 34 to detach the guanine base from the RNA, forming a covalent enzyme-RNA intermediate. The proton acceptor active site deprotonates the incoming PreQ1, allowing a nucleophilic attack on the C1' of the ribose to form the product. After dissociation, two additional enzymatic reactions on the tRNA convert PreQ1 to queuine (Q), resulting in the hypermodified nucleoside queuosine (7-(((4,5-cis-dihydroxy-2-cyclopenten-1-yl)amino)methyl)-7-deazaguanosine). This chain is Queuine tRNA-ribosyltransferase, found in Salmonella arizonae (strain ATCC BAA-731 / CDC346-86 / RSK2980).